The chain runs to 546 residues: Probable E3 ubiquitin-protein ligase NGR_a03640 (546 aa).

The tract at residues 1–70 (MNVQRPGLAV…RPWEGRPQEA (70 aa)) is disordered. The interval 1 to 248 (MNVQRPGLAV…YAGPQIFLPM (248 aa)) is interaction with target proteins. Low complexity predominate over residues 22 to 48 (SEPGSPAAAARWVEASTEAEASAASSS). The span at 58 to 67 (AEERPWEGRP) shows a compositional bias: basic and acidic residues. LRR repeat units follow at residues 104–125 (GLRRLNVNNNQLGDLPDTLPGT), 126–144 (LLELEASENRLTRLPDLPA), 145–166 (GLQRLNVENNRLTNLPEPLPAA), 167–186 (LEWLGAGYNQLTRLPEMIPP), and 187–208 (ELIWLGARNNQLTSVPESLLTQ). The tract at residues 249–256 (GPVELARR) is linker. The region spanning 257–546 (PLHEVVADWL…KVLRGRGLEL (290 aa)) is the NEL domain. The tract at residues 257-546 (PLHEVVADWL…KVLRGRGLEL (290 aa)) is E3 ubiquitin-protein ligase catalytic domain. Cys338 (glycyl thioester intermediate) is an active-site residue.

Belongs to the LRR-containing bacterial E3 ligase family. In terms of processing, ubiquitinated in the presence of host E1 ubiquitin-activating enzyme, E2 ubiquitin-conjugating enzyme and ubiquitin.

It is found in the secreted. The protein localises to the host cytoplasm. Functionally, effector proteins function to alter host cell physiology and promote bacterial survival in host tissues. This protein is an E3 ubiquitin ligase that interferes with host's ubiquitination pathway. The protein is Probable E3 ubiquitin-protein ligase NGR_a03640 of Sinorhizobium fredii (strain NBRC 101917 / NGR234).